The following is a 462-amino-acid chain: Argininosuccinate lyase (462 aa).

This sequence belongs to the lyase 1 family. Argininosuccinate lyase subfamily.

The protein resides in the cytoplasm. The catalysed reaction is 2-(N(omega)-L-arginino)succinate = fumarate + L-arginine. It functions in the pathway amino-acid biosynthesis; L-arginine biosynthesis; L-arginine from L-ornithine and carbamoyl phosphate: step 3/3. This is Argininosuccinate lyase from Caldicellulosiruptor saccharolyticus (strain ATCC 43494 / DSM 8903 / Tp8T 6331).